The following is a 338-amino-acid chain: Holliday junction branch migration complex subunit RuvB (338 aa).

The segment at 1–22 (MVDDERVVSPETADDHEDSVEK) is disordered. The interval 4–185 (DERVVSPETA…FGIVEHMAYY (182 aa)) is large ATPase domain (RuvB-L). ATP is bound by residues Leu-24, Arg-25, Gly-66, Lys-69, Thr-70, Thr-71, 132-134 (EDF), Arg-175, Tyr-185, and Arg-222. Thr-70 is a binding site for Mg(2+). A small ATPAse domain (RuvB-S) region spans residues 186 to 257 (ETTDLQEIVL…IVDHALDLLR (72 aa)). The tract at residues 260–338 (SAGLDATDIK…HLGRTMPDNN (79 aa)) is head domain (RuvB-H). Positions 315 and 320 each coordinate DNA.

The protein belongs to the RuvB family. Homohexamer. Forms an RuvA(8)-RuvB(12)-Holliday junction (HJ) complex. HJ DNA is sandwiched between 2 RuvA tetramers; dsDNA enters through RuvA and exits via RuvB. An RuvB hexamer assembles on each DNA strand where it exits the tetramer. Each RuvB hexamer is contacted by two RuvA subunits (via domain III) on 2 adjacent RuvB subunits; this complex drives branch migration. In the full resolvosome a probable DNA-RuvA(4)-RuvB(12)-RuvC(2) complex forms which resolves the HJ.

The protein resides in the cytoplasm. The enzyme catalyses ATP + H2O = ADP + phosphate + H(+). Its function is as follows. The RuvA-RuvB-RuvC complex processes Holliday junction (HJ) DNA during genetic recombination and DNA repair, while the RuvA-RuvB complex plays an important role in the rescue of blocked DNA replication forks via replication fork reversal (RFR). RuvA specifically binds to HJ cruciform DNA, conferring on it an open structure. The RuvB hexamer acts as an ATP-dependent pump, pulling dsDNA into and through the RuvAB complex. RuvB forms 2 homohexamers on either side of HJ DNA bound by 1 or 2 RuvA tetramers; 4 subunits per hexamer contact DNA at a time. Coordinated motions by a converter formed by DNA-disengaged RuvB subunits stimulates ATP hydrolysis and nucleotide exchange. Immobilization of the converter enables RuvB to convert the ATP-contained energy into a lever motion, pulling 2 nucleotides of DNA out of the RuvA tetramer per ATP hydrolyzed, thus driving DNA branch migration. The RuvB motors rotate together with the DNA substrate, which together with the progressing nucleotide cycle form the mechanistic basis for DNA recombination by continuous HJ branch migration. Branch migration allows RuvC to scan DNA until it finds its consensus sequence, where it cleaves and resolves cruciform DNA. The sequence is that of Holliday junction branch migration complex subunit RuvB from Levilactobacillus brevis (strain ATCC 367 / BCRC 12310 / CIP 105137 / JCM 1170 / LMG 11437 / NCIMB 947 / NCTC 947) (Lactobacillus brevis).